Reading from the N-terminus, the 298-residue chain is Probable alpha-L-glutamate ligase (298 aa).

The region spanning 104–287 is the ATP-grasp domain; that stretch reads MQLLSRHGIG…VAGKIIEFLE (184 aa). ATP is bound by residues K141, 178-179, D187, and 211-213; these read EY and RSN. Mg(2+) is bound by residues D248, E260, and N262. Mn(2+) is bound by residues D248, E260, and N262.

Belongs to the RimK family. It depends on Mg(2+) as a cofactor. Mn(2+) serves as cofactor.

The polypeptide is Probable alpha-L-glutamate ligase (Aeromonas salmonicida (strain A449)).